The following is a 70-amino-acid chain: Large ribosomal subunit protein bL31 (70 aa).

Positions 16, 18, 37, and 40 each coordinate Zn(2+).

This sequence belongs to the bacterial ribosomal protein bL31 family. Type A subfamily. Part of the 50S ribosomal subunit. Zn(2+) is required as a cofactor.

Functionally, binds the 23S rRNA. The protein is Large ribosomal subunit protein bL31 of Psychromonas ingrahamii (strain DSM 17664 / CCUG 51855 / 37).